The following is a 78-amino-acid chain: Omega-conotoxin-like Ac6.5 (78 aa).

An N-terminal signal peptide occupies residues 1–22; that stretch reads MKLTCVVIVAVLLLTACQLLTA. Residues 23–42 constitute a propeptide that is removed on maturation; the sequence is DDSRGTQKHRSLRSTTKVSK. 3 disulfides stabilise this stretch: Cys-46–Cys-62, Cys-53–Cys-65, and Cys-61–Cys-72. Pro-55 and Pro-67 each carry 4-hydroxyproline.

This sequence belongs to the conotoxin O1 superfamily. Expressed by the venom duct.

The protein localises to the secreted. In terms of biological role, omega-conotoxins act at presynaptic membranes, they bind and block voltage-gated calcium channels (Cav). In Conus achatinus (Little frog cone), this protein is Omega-conotoxin-like Ac6.5.